Consider the following 328-residue polypeptide: Phosphatidylglycerol--prolipoprotein diacylglyceryl transferase (328 aa).

The next 3 helical transmembrane spans lie at 15–35, 58–78, and 106–126; these read VIQGIPITWYSLSYIFIILIS, FMFSLVLGAILGGRLASTLVY, and GMAIHGGFLGAIIAPLIIINT. An a 1,2-diacyl-sn-glycero-3-phospho-(1'-sn-glycerol)-binding site is contributed by Arg-156. Transmembrane regions (helical) follow at residues 242 to 262 and 289 to 309; these read GFIFGIYVMLYAFFRFFIEYL and ISMGQILSLVLMFSGLIWVVV.

This sequence belongs to the Lgt family.

The protein resides in the cell inner membrane. It carries out the reaction L-cysteinyl-[prolipoprotein] + a 1,2-diacyl-sn-glycero-3-phospho-(1'-sn-glycerol) = an S-1,2-diacyl-sn-glyceryl-L-cysteinyl-[prolipoprotein] + sn-glycerol 1-phosphate + H(+). It functions in the pathway protein modification; lipoprotein biosynthesis (diacylglyceryl transfer). In terms of biological role, catalyzes the transfer of the diacylglyceryl group from phosphatidylglycerol to the sulfhydryl group of the N-terminal cysteine of a prolipoprotein, the first step in the formation of mature lipoproteins. The sequence is that of Phosphatidylglycerol--prolipoprotein diacylglyceryl transferase from Borrelia garinii subsp. bavariensis (strain ATCC BAA-2496 / DSM 23469 / PBi) (Borreliella bavariensis).